Here is a 59-residue protein sequence, read N- to C-terminus: Large ribosomal subunit protein bL32 (59 aa).

A disordered region spans residues 1-59; that stretch reads MAVQQNKKSPSKRGMHRAHDFLTTPPLAVESTTGEAHLRHHISPAGFYRGKKVTKGKGE. The span at 49-59 shows a compositional bias: basic residues; that stretch reads RGKKVTKGKGE.

The protein belongs to the bacterial ribosomal protein bL32 family.

This is Large ribosomal subunit protein bL32 from Dechloromonas aromatica (strain RCB).